The primary structure comprises 207 residues: NADH-quinone oxidoreductase subunit C (207 aa).

The protein belongs to the complex I 30 kDa subunit family. In terms of assembly, NDH-1 is composed of 14 different subunits. Subunits NuoB, C, D, E, F, and G constitute the peripheral sector of the complex.

The protein localises to the cell inner membrane. The enzyme catalyses a quinone + NADH + 5 H(+)(in) = a quinol + NAD(+) + 4 H(+)(out). In terms of biological role, NDH-1 shuttles electrons from NADH, via FMN and iron-sulfur (Fe-S) centers, to quinones in the respiratory chain. The immediate electron acceptor for the enzyme in this species is believed to be ubiquinone. Couples the redox reaction to proton translocation (for every two electrons transferred, four hydrogen ions are translocated across the cytoplasmic membrane), and thus conserves the redox energy in a proton gradient. The protein is NADH-quinone oxidoreductase subunit C of Jannaschia sp. (strain CCS1).